Reading from the N-terminus, the 454-residue chain is Keratin, type I cuticular Ha5 (454 aa).

Residues 1–97 form a head region; that stretch reads MASKCLKASF…FGEGILTGNE (97 aa). The IF rod domain maps to 97–407; the sequence is EKETMQFLND…GLLDSEDCKL (311 aa). Residues 98–125 form a coil 1A region; sequence KETMQFLNDRLASYLEKCGSWSGRTRSW. Residues 134 to 142 form a linker 1 region; it reads SNSALPVPD. The segment at 143-243 is coil 1B; that stretch reads YQSYFQTIEE…HEEEVNSLRC (101 aa). The segment at 244–259 is linker 12; it reads QLGDRLNVEVDAAPPV. The segment at 260–403 is coil 2; that stretch reads DLNRVLNEMR…NTYRGLLDSE (144 aa). The interval 404–454 is tail; it reads DCKLPCNPCAPDHSPSKSCLPCLPAASCGPGMARTTCSPRPICVPCPGSRF.

This sequence belongs to the intermediate filament family.

The sequence is that of Keratin, type I cuticular Ha5 from Bos taurus (Bovine).